The following is a 475-amino-acid chain: Fez family zinc finger protein 1 (475 aa).

An Engrailed homology 1 repressor motif is present at residues 28 to 43 (PLAFSIERIMARTPEP). 6 consecutive C2H2-type zinc fingers follow at residues 260 to 282 (FTCE…MPVH), 288 to 310 (FVCK…KIIH), 316 to 338 (HKCN…TRIH), 344 to 366 (FVCE…KLTH), 372 to 394 (FKCN…MHTH), and 400 to 423 (FTCP…RKLH). Residues 425–475 (SSLGLTRTPTGEPSSDPPPQLQQPPPAPLPPLQPTLPPPGPLPSGLHQGHQ) form a disordered region. The span at 427-437 (LGLTRTPTGEP) shows a compositional bias: polar residues. Pro residues predominate over residues 439–466 (SDPPPQLQQPPPAPLPPLQPTLPPPGPL).

The protein belongs to the krueppel C2H2-type zinc-finger protein family.

The protein localises to the nucleus. Transcription repressor. Involved in the axonal projection and proper termination of olfactory sensory neurons (OSN). Plays a role in rostro-caudal patterning of the diencephalon and in prethalamic formation. Expression is required in OSN to cell-autonomously regulate OSN axon projections. Regulates non-cell-autonomously the layer formation of the olfactory bulb development and the interneurons. May be required for correct rostral migration of the interneuron progenitors. This chain is Fez family zinc finger protein 1 (Fezf1), found in Mus musculus (Mouse).